We begin with the raw amino-acid sequence, 95 residues long: UPF0235 protein Sama_2480 (95 aa).

It belongs to the UPF0235 family.

In Shewanella amazonensis (strain ATCC BAA-1098 / SB2B), this protein is UPF0235 protein Sama_2480.